We begin with the raw amino-acid sequence, 85 residues long: MSAKNNIQDQLLNTARKDKLDLTIYLLNGVPLKGKVVSFDNFTIVLEQENKQSLVYKHAISTIIPAKIIKLYTEEAKDNKDAAQG.

Residues 9-69 enclose the Sm domain; that stretch reads DQLLNTARKD…ISTIIPAKII (61 aa).

The protein belongs to the Hfq family. As to quaternary structure, homohexamer.

RNA chaperone that binds small regulatory RNA (sRNAs) and mRNAs to facilitate mRNA translational regulation in response to envelope stress, environmental stress and changes in metabolite concentrations. Also binds with high specificity to tRNAs. The chain is RNA-binding protein Hfq from Leptospira interrogans serogroup Icterohaemorrhagiae serovar copenhageni (strain Fiocruz L1-130).